The following is a 112-amino-acid chain: Head completion protein gp7 (112 aa).

Belongs to the Caudoviricetes gp7/gp16 head completion protein family. As to quaternary structure, interacts with the connector protein gp15. Interacts with the head-tail joining protein gp17.

It is found in the virion. In terms of biological role, functions as a stopper that is part of the head-tail connector and that locks the viral DNA in the capsid. Following tail attachment to the entry receptor, seems to open by a diaphragm-like motion, allowing the genome to exit the capsid through the tail tube to the host cell. During assembly, functions as a docking platform which the preassembled tail tapered by the head-tail joining protein gp17 can bind to. This Escherichia coli (Bacteriophage HK97) protein is Head completion protein gp7.